The sequence spans 493 residues: Dipeptide permease D (493 aa).

Transmembrane regions (helical) follow at residues 14 to 34 (VVAL…LLIL), 49 to 69 (ALFS…GYLA), 91 to 111 (LVLG…AIIV), 138 to 158 (GGFS…PIAC), 167 to 187 (WAMG…IFLC), 212 to 232 (NWGW…VLFW), 235 to 255 (WAVY…GKIY), 267 to 287 (LGLI…AQQG), 312 to 332 (MFQS…AWLI), 344 to 364 (IWGK…ILTL), 379 to 399 (LMIA…PVAM), 413 to 433 (VLTG…AGVI), and 458 to 478 (VFSE…LIWL).

It belongs to the major facilitator superfamily. Proton-dependent oligopeptide transporter (POT/PTR) (TC 2.A.17) family. DtpD subfamily.

It is found in the cell inner membrane. In terms of biological role, probable proton-dependent permease that transports dipeptides. This is Dipeptide permease D from Citrobacter rodentium (strain ICC168) (Citrobacter freundii biotype 4280).